Consider the following 532-residue polypeptide: 3-hydroxy-3-methylglutaryl-coenzyme A reductase 1 (532 aa).

Residues 63 to 83 traverse the membrane as a helical segment; that stretch reads FATVVYLVSLFAHPDAPATTT. The interval 77 to 117 is linker; sequence DAPATTTGDDDDGQGGSRRARPAAAEPAPMHGHGGGMMEAD. Positions 78-111 are disordered; sequence APATTTGDDDDGQGGSRRARPAAAEPAPMHGHGG. Low complexity predominate over residues 98–107; that stretch reads PAAAEPAPMH. The interval 118–532 is catalytic; sequence DEEIVAAVAS…SSKDVAKAAS (415 aa). Glu211 functions as the Charge relay system in the catalytic mechanism. Residue Asn275 is glycosylated (N-linked (GlcNAc...) asparagine). Residues Lys343 and Asp419 each act as charge relay system in the active site. His517 acts as the Proton donor in catalysis. The N-linked (GlcNAc...) asparagine glycan is linked to Asn521.

Belongs to the HMG-CoA reductase family.

The protein localises to the endoplasmic reticulum membrane. It carries out the reaction (R)-mevalonate + 2 NADP(+) + CoA = (3S)-3-hydroxy-3-methylglutaryl-CoA + 2 NADPH + 2 H(+). It functions in the pathway metabolic intermediate biosynthesis; (R)-mevalonate biosynthesis; (R)-mevalonate from acetyl-CoA: step 3/3. In terms of biological role, catalyzes the synthesis of mevalonate. The specific precursor of all isoprenoid compounds present in plants. This Oryza sativa subsp. japonica (Rice) protein is 3-hydroxy-3-methylglutaryl-coenzyme A reductase 1 (HMG1).